The primary structure comprises 145 residues: 3-dehydroquinate dehydratase (145 aa).

Residue tyrosine 22 is the Proton acceptor of the active site. The substrate site is built by asparagine 74, histidine 80, and aspartate 87. The active-site Proton donor is the histidine 100. Substrate-binding positions include 101–102 and arginine 111; that span reads IS.

It belongs to the type-II 3-dehydroquinase family. In terms of assembly, homododecamer.

The catalysed reaction is 3-dehydroquinate = 3-dehydroshikimate + H2O. The protein operates within metabolic intermediate biosynthesis; chorismate biosynthesis; chorismate from D-erythrose 4-phosphate and phosphoenolpyruvate: step 3/7. Functionally, catalyzes a trans-dehydration via an enolate intermediate. This chain is 3-dehydroquinate dehydratase, found in Lachnoclostridium phytofermentans (strain ATCC 700394 / DSM 18823 / ISDg) (Clostridium phytofermentans).